We begin with the raw amino-acid sequence, 595 residues long: SVP1-like protein 2 (595 aa).

The disordered stretch occupies residues 1 to 28; it reads MVLAHSINTNPNTNTNTNNTSTTSSTTT. A WD 1 repeat occupies 30–68; that stretch reads PNDSKILCINFNQDQGCFAISHEQGFLVYNTDPIELRVK. 2 stretches are compositionally biased toward low complexity: residues 76 to 112 and 270 to 339; these read HTTSSRSNHSNGSNSNNNHRNNSTGSNGSVSSSGSNN and LSPT…TTTT. 2 disordered regions span residues 76-132 and 264-342; these read HTTS…GSGS and FSKR…TSAK. 2 WD repeats span residues 389 to 429 and 434 to 473; these read AHKS…LLYE and IDRAIITSMKFSHDDSKLAVLSDKHTLHVYNIDETQYPND. The interval 467–490 is disordered; that stretch reads ETQYPNDGGSGGTKDGGGGGRGSK. The span at 474–488 shows a compositional bias: gly residues; that stretch reads GGSGGTKDGGGGGRG.

It belongs to the WD repeat PROPPIN family.

It localises to the vacuole membrane. It is found in the cytoplasmic vesicle membrane. Its function is as follows. Involved in mitochondrial or peroxisomal functions and amino acid signaling pathways. This chain is SVP1-like protein 2 (HSV2), found in Candida albicans (strain SC5314 / ATCC MYA-2876) (Yeast).